Consider the following 257-residue polypeptide: MGKVYIVGAGPGDPDLLTIKALKAIEKADVILYDRLVNKEILQYAKEQADLIYCGKLPDFHTMKQETINRFLVKYAQKGKMVVRLKGGDPFVFGRGGEEAECLSENGIPFEIIPGITSGIAAAAYAGIPVTHRDAGSNVAFVTGHYKKEEDFEEKWKALATGIDTLVIYMGIKNVQQIERKLLENGRDGSTPAAFIHWGTTDKQKSVFCTVDTLSETVIKENITNPSLIVIGNVVNYHYKLEWFESELKKQDLSEAL.

Residues proline 11, 87 to 89 (GGD), 117 to 118 (TS), and methionine 170 contribute to the S-adenosyl-L-homocysteine site.

Belongs to the precorrin methyltransferase family.

It catalyses the reaction uroporphyrinogen III + 2 S-adenosyl-L-methionine = precorrin-2 + 2 S-adenosyl-L-homocysteine + H(+). It participates in cofactor biosynthesis; adenosylcobalamin biosynthesis; precorrin-2 from uroporphyrinogen III: step 1/1. The protein operates within porphyrin-containing compound metabolism; siroheme biosynthesis; precorrin-2 from uroporphyrinogen III: step 1/1. Its function is as follows. Catalyzes the two successive C-2 and C-7 methylation reactions involved in the conversion of uroporphyrinogen III to precorrin-2 via the intermediate formation of precorrin-1. It is a step in the biosynthesis of both cobalamin (vitamin B12) and siroheme. The polypeptide is Uroporphyrinogen-III C-methyltransferase (sumT) (Bacillus subtilis (strain 168)).